The sequence spans 648 residues: DNA mismatch repair protein MutL (648 aa).

Residues 385 to 430 form a disordered region; the sequence is STVKGPAVNEPLTENTLNQQKVKTSASTPVVHTGNSVEPKPETSTA. Positions 396-430 are enriched in polar residues; sequence LTENTLNQQKVKTSASTPVVHTGNSVEPKPETSTA.

The protein belongs to the DNA mismatch repair MutL/HexB family.

In terms of biological role, this protein is involved in the repair of mismatches in DNA. It is required for dam-dependent methyl-directed DNA mismatch repair. May act as a 'molecular matchmaker', a protein that promotes the formation of a stable complex between two or more DNA-binding proteins in an ATP-dependent manner without itself being part of a final effector complex. The chain is DNA mismatch repair protein MutL from Agathobacter rectalis (strain ATCC 33656 / DSM 3377 / JCM 17463 / KCTC 5835 / VPI 0990) (Eubacterium rectale).